The chain runs to 98 residues: NADH-ubiquinone oxidoreductase chain 4L (98 aa).

3 helical membrane passes run 1–21 (MSMVYINIFLAFIMSLMGLLM), 29–49 (SLLCLEGMMLSLFIMMTMVVL), and 61–81 (IILLVFAACEAALGLSLLVMV).

This sequence belongs to the complex I subunit 4L family. Core subunit of respiratory chain NADH dehydrogenase (Complex I) which is composed of 45 different subunits.

It localises to the mitochondrion inner membrane. It carries out the reaction a ubiquinone + NADH + 5 H(+)(in) = a ubiquinol + NAD(+) + 4 H(+)(out). Its function is as follows. Core subunit of the mitochondrial membrane respiratory chain NADH dehydrogenase (Complex I) which catalyzes electron transfer from NADH through the respiratory chain, using ubiquinone as an electron acceptor. Part of the enzyme membrane arm which is embedded in the lipid bilayer and involved in proton translocation. This chain is NADH-ubiquinone oxidoreductase chain 4L (MT-ND4L), found in Acinonyx jubatus (Cheetah).